A 516-amino-acid chain; its full sequence is Putative protein NRT1/ PTR FAMILY 2.2 (516 aa).

A run of 11 helical transmembrane segments spans residues 31 to 51 (TLLGLSIASFGWVMNLVVFLI), 67 to 87 (IVNGCVSMLPVVAAILADSFF), 90 to 110 (IPVISVSAFISLLGIILLTMI), 138 to 158 (ILYIALALVIIGSAGTRFTLA), 174 to 194 (FFNWYFLTLYTGAITGATAIV), 201 to 221 (SWKLGFGLCAVANLISFIVFV), 320 to 340 (LLLAIIFVSTPMVTQTSLIIL), 362 to 382 (VIVIITACIVILMNNCLVYPM), 394 to 414 (LQKVGIGHVFIILSMAISAIV), 437 to 457 (FIASVVIGISFYLSTALITLI), and 476 to 496 (VYWLLVIVGVLNYFLVCAWFY).

This sequence belongs to the major facilitator superfamily. Proton-dependent oligopeptide transporter (POT/PTR) (TC 2.A.17) family. As to expression, not detected.

The protein localises to the membrane. Functionally, transporter involved in a passive nitrate efflux. The protein is Putative protein NRT1/ PTR FAMILY 2.2 (NPF2.2) of Arabidopsis thaliana (Mouse-ear cress).